The chain runs to 197 residues: Recombination protein RecR (197 aa).

The segment at 56-71 (CQRCHSFSDEAVCPLC) adopts a C4-type zinc-finger fold. The Toprim domain maps to 79–174 (TLLCVVETAA…KVTRLAQGVP (96 aa)).

This sequence belongs to the RecR family.

Functionally, may play a role in DNA repair. It seems to be involved in an RecBC-independent recombinational process of DNA repair. It may act with RecF and RecO. This is Recombination protein RecR from Psychrobacter cryohalolentis (strain ATCC BAA-1226 / DSM 17306 / VKM B-2378 / K5).